A 79-amino-acid chain; its full sequence is Acyl carrier protein (79 aa).

In terms of domain architecture, Carrier spans 2 to 77 (SSIEERVKKI…QAVDYINKHL (76 aa)). Ser-37 is modified (O-(pantetheine 4'-phosphoryl)serine).

It belongs to the acyl carrier protein (ACP) family. 4'-phosphopantetheine is transferred from CoA to a specific serine of apo-ACP by AcpS. This modification is essential for activity because fatty acids are bound in thioester linkage to the sulfhydryl of the prosthetic group.

The protein localises to the cytoplasm. The protein operates within lipid metabolism; fatty acid biosynthesis. In terms of biological role, carrier of the growing fatty acid chain in fatty acid biosynthesis. The sequence is that of Acyl carrier protein from Alkalilimnicola ehrlichii (strain ATCC BAA-1101 / DSM 17681 / MLHE-1).